Reading from the N-terminus, the 393-residue chain is Formate-dependent phosphoribosylglycinamide formyltransferase (393 aa).

N(1)-(5-phospho-beta-D-ribosyl)glycinamide is bound by residues 22 to 23 and glutamate 82; that span reads EL. ATP-binding positions include arginine 114, lysine 155, 160 to 165, 195 to 198, and glutamate 203; these read SSGKGQ and EGFI. Residues 119-308 enclose the ATP-grasp domain; the sequence is RLAAEELKLP…QFALHARAIL (190 aa). Residues glutamate 267 and glutamate 279 each coordinate Mg(2+). Residues aspartate 286, lysine 356, and 363–364 contribute to the N(1)-(5-phospho-beta-D-ribosyl)glycinamide site; that span reads RR.

This sequence belongs to the PurK/PurT family. As to quaternary structure, homodimer.

The enzyme catalyses N(1)-(5-phospho-beta-D-ribosyl)glycinamide + formate + ATP = N(2)-formyl-N(1)-(5-phospho-beta-D-ribosyl)glycinamide + ADP + phosphate + H(+). The protein operates within purine metabolism; IMP biosynthesis via de novo pathway; N(2)-formyl-N(1)-(5-phospho-D-ribosyl)glycinamide from N(1)-(5-phospho-D-ribosyl)glycinamide (formate route): step 1/1. In terms of biological role, involved in the de novo purine biosynthesis. Catalyzes the transfer of formate to 5-phospho-ribosyl-glycinamide (GAR), producing 5-phospho-ribosyl-N-formylglycinamide (FGAR). Formate is provided by PurU via hydrolysis of 10-formyl-tetrahydrofolate. This is Formate-dependent phosphoribosylglycinamide formyltransferase from Pseudomonas syringae pv. syringae (strain B728a).